A 444-amino-acid chain; its full sequence is Phosphoglucosamine mutase (444 aa).

Ser102 functions as the Phosphoserine intermediate in the catalytic mechanism. Mg(2+) contacts are provided by Ser102, Asp241, Asp243, and Asp245. Phosphoserine is present on Ser102.

It belongs to the phosphohexose mutase family. Requires Mg(2+) as cofactor. Activated by phosphorylation.

It catalyses the reaction alpha-D-glucosamine 1-phosphate = D-glucosamine 6-phosphate. Functionally, catalyzes the conversion of glucosamine-6-phosphate to glucosamine-1-phosphate. The sequence is that of Phosphoglucosamine mutase from Paracidovorax citrulli (strain AAC00-1) (Acidovorax citrulli).